Here is a 122-residue protein sequence, read N- to C-terminus: Large ribosomal subunit protein uL14 (122 aa).

This sequence belongs to the universal ribosomal protein uL14 family. In terms of assembly, part of the 50S ribosomal subunit. Forms a cluster with proteins L3 and L19. In the 70S ribosome, L14 and L19 interact and together make contacts with the 16S rRNA in bridges B5 and B8.

Its function is as follows. Binds to 23S rRNA. Forms part of two intersubunit bridges in the 70S ribosome. The protein is Large ribosomal subunit protein uL14 of Bifidobacterium longum (strain DJO10A).